Reading from the N-terminus, the 60-residue chain is Large ribosomal subunit protein uL30 (60 aa).

This sequence belongs to the universal ribosomal protein uL30 family. Part of the 50S ribosomal subunit.

In Albidiferax ferrireducens (strain ATCC BAA-621 / DSM 15236 / T118) (Rhodoferax ferrireducens), this protein is Large ribosomal subunit protein uL30.